The primary structure comprises 406 residues: Probable transcription factor FPSE_09188 (406 aa).

A disordered region spans residues 1 to 72; that stretch reads MELPTYAVSQ…PKGSSSRCNG (72 aa). Low complexity predominate over residues 7–20; the sequence is AVSQSLLASRSVSS.

It belongs to the bZIP family.

Its subcellular location is the nucleus. Functionally, the two putative transcription factors FPSE_09188 and FPSE_09189 could be responsible for orchestrating expression of the W493 A and B biosynthesis cluster genes. W493 A and B consist of six amino acid residues D-allo-thr, L-Ala, D-Ala, L-Gln, D-Tyr, and L-Val/L-Ile linked to a 3-hydroxy-4-methyltetradecanoic acid polyketide chain. This Fusarium pseudograminearum (strain CS3096) (Wheat and barley crown-rot fungus) protein is Probable transcription factor FPSE_09188.